The primary structure comprises 329 residues: Ketol-acid reductoisomerase (NADP(+)) (329 aa).

Residues threonine 2–threonine 182 enclose the KARI N-terminal Rossmann domain. NADP(+) is bound by residues tyrosine 25–glutamine 28, serine 51, serine 53, and aspartate 83–glutamine 86. Histidine 108 is a catalytic residue. Glycine 134 lines the NADP(+) pocket. Positions asparagine 183–leucine 328 constitute a KARI C-terminal knotted domain. Positions 191, 195, 227, and 231 each coordinate Mg(2+). Residue serine 252 coordinates substrate.

It belongs to the ketol-acid reductoisomerase family. Mg(2+) is required as a cofactor.

The enzyme catalyses (2R)-2,3-dihydroxy-3-methylbutanoate + NADP(+) = (2S)-2-acetolactate + NADPH + H(+). It carries out the reaction (2R,3R)-2,3-dihydroxy-3-methylpentanoate + NADP(+) = (S)-2-ethyl-2-hydroxy-3-oxobutanoate + NADPH + H(+). Its pathway is amino-acid biosynthesis; L-isoleucine biosynthesis; L-isoleucine from 2-oxobutanoate: step 2/4. The protein operates within amino-acid biosynthesis; L-valine biosynthesis; L-valine from pyruvate: step 2/4. Functionally, involved in the biosynthesis of branched-chain amino acids (BCAA). Catalyzes an alkyl-migration followed by a ketol-acid reduction of (S)-2-acetolactate (S2AL) to yield (R)-2,3-dihydroxy-isovalerate. In the isomerase reaction, S2AL is rearranged via a Mg-dependent methyl migration to produce 3-hydroxy-3-methyl-2-ketobutyrate (HMKB). In the reductase reaction, this 2-ketoacid undergoes a metal-dependent reduction by NADPH to yield (R)-2,3-dihydroxy-isovalerate. The chain is Ketol-acid reductoisomerase (NADP(+)) from Prochlorococcus marinus (strain MIT 9301).